A 156-amino-acid chain; its full sequence is Large ribosomal subunit protein uL30 (156 aa).

The protein belongs to the universal ribosomal protein uL30 family. As to quaternary structure, part of the 50S ribosomal subunit.

This chain is Large ribosomal subunit protein uL30, found in Thermofilum pendens (strain DSM 2475 / Hrk 5).